Here is a 463-residue protein sequence, read N- to C-terminus: uncharacterized protein (463 aa).

This is an uncharacterized protein from Saccharomyces cerevisiae (strain ATCC 204508 / S288c) (Baker's yeast).